The following is a 779-amino-acid chain: Endonuclease MutS2 (779 aa).

328 to 335 (GPNTGGKT) serves as a coordination point for ATP. Positions 704 to 779 (LDLRGKRYEE…GSGATIVTLG (76 aa)) constitute a Smr domain.

It belongs to the DNA mismatch repair MutS family. MutS2 subfamily. As to quaternary structure, homodimer. Binds to stalled ribosomes, contacting rRNA.

In terms of biological role, endonuclease that is involved in the suppression of homologous recombination and thus may have a key role in the control of bacterial genetic diversity. Acts as a ribosome collision sensor, splitting the ribosome into its 2 subunits. Detects stalled/collided 70S ribosomes which it binds and splits by an ATP-hydrolysis driven conformational change. Acts upstream of the ribosome quality control system (RQC), a ribosome-associated complex that mediates the extraction of incompletely synthesized nascent chains from stalled ribosomes and their subsequent degradation. Probably generates substrates for RQC. This chain is Endonuclease MutS2, found in Streptococcus pyogenes serotype M1.